A 1032-amino-acid chain; its full sequence is Protein transport protein Sec24D (1032 aa).

The disordered stretch occupies residues 1-260 (MSQQGYVATP…GPPQPQKKLD (260 aa)). Polar residues predominate over residues 102–133 (PSAQSSYPGPISTSSVTQLGSQLSAMQINSYG). A compositionally biased stretch (pro residues) spans 198 to 212 (GPPPPNAQYQPPPLP). Ser266 carries the post-translational modification Phosphoserine. Zn(2+) contacts are provided by Cys363, Cys366, Cys385, and Cys388. The segment at 363-388 (CNRCKAYMCPFMQFIEGGRRYQCGFC) is zinc finger-like. One copy of the Gelsolin-like repeat lies at 901–974 (MLPAAVRCSE…PYSQQLRMIM (74 aa)).

It belongs to the SEC23/SEC24 family. SEC24 subfamily. As to quaternary structure, COPII is composed of at least five proteins: the Sec23/24 complex, the Sec13/31 complex and Sar1. Interacts with TMED2 and TMED10. Interacts with CNIH4. Interacts with GOSR2 (via IxM motif) and STX5 (via IxM motif); recruits GOSR2 and STX5 into COPII-coated vesicles. Interacts with KCNA3; this interaction is reduced in the presence of KCNE4. In terms of tissue distribution, ubiquitously expressed, with higher amounts in placenta, pancreas, heart and liver.

The protein resides in the cytoplasmic vesicle. It is found in the COPII-coated vesicle membrane. It localises to the endoplasmic reticulum membrane. Its subcellular location is the cytoplasm. The protein localises to the cytosol. Its function is as follows. Component of the coat protein complex II (COPII) which promotes the formation of transport vesicles from the endoplasmic reticulum (ER). The coat has two main functions, the physical deformation of the endoplasmic reticulum membrane into vesicles and the selection of cargo molecules for their transport to the Golgi complex. Plays a central role in cargo selection within the COPII complex and together with SEC24C may have a different specificity compared to SEC24A and SEC24B. May more specifically package GPI-anchored proteins through the cargo receptor TMED10. May also be specific for IxM motif-containing cargos like the SNAREs GOSR2 and STX5. The polypeptide is Protein transport protein Sec24D (Homo sapiens (Human)).